The primary structure comprises 449 residues: Type 3 secretion system ATPase (449 aa).

Position 178–183 (178–183) interacts with ATP; the sequence is GCGKTT.

Belongs to the ATPase alpha/beta chains family. T3SS ATPase subfamily. In terms of assembly, the core secretion machinery of the T3SS is composed of approximately 20 different proteins, including cytoplasmic components, a base, an export apparatus and a needle. This subunit is part of the cytosolic complex. Forms homododecamers. Comprises two hexameric rings that are probably stacked face-to-face by the association of their C-terminal domains. Also present as monomer and homohexamer in solution.

Its subcellular location is the cytoplasm. It carries out the reaction ATP + H2O + cellular proteinSide 1 = ADP + phosphate + cellular proteinSide 2.. With respect to regulation, oligomerization increases ATPase activity. Its function is as follows. ATPase component of the type III secretion system (T3SS), also called injectisome, which is used to inject bacterial effector proteins into eukaryotic host cells. Acts as a molecular motor to provide the energy that is required for the export of proteins. Required for type III secretion apparatus (T3SA) formation, proper protein secretion, host cell invasion and virulence. May play a critical role in T3SS substrate recognition, disassembly of the effector/chaperone complex and unfolding of the effector in an ATP-dependent manner prior to secretion. The polypeptide is Type 3 secretion system ATPase (Pseudomonas savastanoi pv. phaseolicola (Pseudomonas syringae pv. phaseolicola)).